Reading from the N-terminus, the 150-residue chain is 3-hydroxyacyl-[acyl-carrier-protein] dehydratase FabZ (150 aa).

The active site involves H54.

The protein belongs to the thioester dehydratase family. FabZ subfamily.

It is found in the cytoplasm. It carries out the reaction a (3R)-hydroxyacyl-[ACP] = a (2E)-enoyl-[ACP] + H2O. In terms of biological role, involved in unsaturated fatty acids biosynthesis. Catalyzes the dehydration of short chain beta-hydroxyacyl-ACPs and long chain saturated and unsaturated beta-hydroxyacyl-ACPs. In Vibrio parahaemolyticus serotype O3:K6 (strain RIMD 2210633), this protein is 3-hydroxyacyl-[acyl-carrier-protein] dehydratase FabZ.